Consider the following 1185-residue polypeptide: DNA-directed RNA polymerase subunit beta' (1185 aa).

Zn(2+) is bound by residues Cys-60, Cys-62, Cys-75, and Cys-78. Asp-449, Asp-451, and Asp-453 together coordinate Mg(2+). Residues Cys-774, Cys-853, Cys-860, and Cys-863 each contribute to the Zn(2+) site.

It belongs to the RNA polymerase beta' chain family. As to quaternary structure, the RNAP catalytic core consists of 2 alpha, 1 beta, 1 beta' and 1 omega subunit. When a sigma factor is associated with the core the holoenzyme is formed, which can initiate transcription. Requires Mg(2+) as cofactor. It depends on Zn(2+) as a cofactor.

It carries out the reaction RNA(n) + a ribonucleoside 5'-triphosphate = RNA(n+1) + diphosphate. Functionally, DNA-dependent RNA polymerase catalyzes the transcription of DNA into RNA using the four ribonucleoside triphosphates as substrates. The protein is DNA-directed RNA polymerase subunit beta' of Desulforamulus reducens (strain ATCC BAA-1160 / DSM 100696 / MI-1) (Desulfotomaculum reducens).